Reading from the N-terminus, the 287-residue chain is Elongation factor Ts (287 aa).

The interval 80–83 (TDFL) is involved in Mg(2+) ion dislocation from EF-Tu.

This sequence belongs to the EF-Ts family.

The protein resides in the cytoplasm. Functionally, associates with the EF-Tu.GDP complex and induces the exchange of GDP to GTP. It remains bound to the aminoacyl-tRNA.EF-Tu.GTP complex up to the GTP hydrolysis stage on the ribosome. The sequence is that of Elongation factor Ts from Pseudomonas fluorescens (strain SBW25).